A 372-amino-acid polypeptide reads, in one-letter code: Queuine tRNA-ribosyltransferase (372 aa).

Catalysis depends on Asp-92, which acts as the Proton acceptor. Residues 92–96 (DSGGY), Asp-146, Gln-188, and Gly-215 contribute to the substrate site. The interval 246-252 (GIGSLRE) is RNA binding. Asp-265 serves as the catalytic Nucleophile. Residues 270–274 (TRLGR) are RNA binding; important for wobble base 34 recognition. Residues Cys-303, Cys-305, Cys-308, and His-334 each coordinate Zn(2+).

Belongs to the queuine tRNA-ribosyltransferase family. In terms of assembly, homodimer. Within each dimer, one monomer is responsible for RNA recognition and catalysis, while the other monomer binds to the replacement base PreQ1. Zn(2+) serves as cofactor.

The catalysed reaction is 7-aminomethyl-7-carbaguanine + guanosine(34) in tRNA = 7-aminomethyl-7-carbaguanosine(34) in tRNA + guanine. Its pathway is tRNA modification; tRNA-queuosine biosynthesis. Its function is as follows. Catalyzes the base-exchange of a guanine (G) residue with the queuine precursor 7-aminomethyl-7-deazaguanine (PreQ1) at position 34 (anticodon wobble position) in tRNAs with GU(N) anticodons (tRNA-Asp, -Asn, -His and -Tyr). Catalysis occurs through a double-displacement mechanism. The nucleophile active site attacks the C1' of nucleotide 34 to detach the guanine base from the RNA, forming a covalent enzyme-RNA intermediate. The proton acceptor active site deprotonates the incoming PreQ1, allowing a nucleophilic attack on the C1' of the ribose to form the product. After dissociation, two additional enzymatic reactions on the tRNA convert PreQ1 to queuine (Q), resulting in the hypermodified nucleoside queuosine (7-(((4,5-cis-dihydroxy-2-cyclopenten-1-yl)amino)methyl)-7-deazaguanosine). The sequence is that of Queuine tRNA-ribosyltransferase from Prochlorococcus marinus subsp. pastoris (strain CCMP1986 / NIES-2087 / MED4).